The following is a 124-amino-acid chain: uncharacterized protein (124 aa).

A helical transmembrane segment spans residues 2–22 (AIIIAIIAAVIVIAALITFNV). The tract at residues 24 to 124 (NASPGPEKQE…ALLSMKNKKK (101 aa)) is disordered. Basic and acidic residues-rich tracts occupy residues 30-58 (EKQE…RAAE), 67-81 (DSPK…DDIY), and 89-113 (KHSD…RSYR).

It is found in the membrane. This is an uncharacterized protein from Bacillus subtilis (strain 168).